A 504-amino-acid polypeptide reads, in one-letter code: Anaerobic nitric oxide reductase transcription regulator NorR (504 aa).

The residue at position 57 (D57) is a 4-aspartylphosphate. One can recognise a Sigma-54 factor interaction domain in the interval 187-416 (MIGLSPGMTQ…LEHAIHRAVV (230 aa)). Residues 215–222 (GETGTGKE) and 278–287 (ADNGTLFLDE) each bind ATP. Residues 479-498 (WAACARMLETDVANLHRLAK) constitute a DNA-binding region (H-T-H motif).

It participates in nitrogen metabolism; nitric oxide reduction. Required for the expression of anaerobic nitric oxide (NO) reductase, acts as a transcriptional activator for at least the norVW operon. Activation also requires sigma-54. This is Anaerobic nitric oxide reductase transcription regulator NorR from Escherichia coli O45:K1 (strain S88 / ExPEC).